Here is a 103-residue protein sequence, read N- to C-terminus: Thrombin inhibitor rhodniin (103 aa).

2 Kazal-like domains span residues glutamate 1–proline 50 and aspartate 51–threonine 103. Cystine bridges form between cysteine 6–cysteine 31, cysteine 8–cysteine 27, cysteine 16–cysteine 48, cysteine 57–cysteine 84, cysteine 60–cysteine 80, and cysteine 69–cysteine 101.

Its subcellular location is the secreted. Thrombin-specific inhibitor. Appears to form 1:1 complexes with thrombin. Prevents blood clotting to allow the insect to feed on blood. This Rhodnius prolixus (Triatomid bug) protein is Thrombin inhibitor rhodniin.